A 419-amino-acid chain; its full sequence is Putative competence-damage inducible protein (419 aa).

The protein belongs to the CinA family.

This chain is Putative competence-damage inducible protein, found in Lysinibacillus sphaericus (strain C3-41).